The following is a 115-amino-acid chain: U3-lycotoxin-Ls1s (115 aa).

The N-terminal stretch at 1 to 20 (MKFVLLFGVFLLTLFSYSSS) is a signal peptide. A propeptide spanning residues 21 to 44 (EMLDDFDQADEDELLSLIEKEEAR) is cleaved from the precursor. 4 disulfide bridges follow: Cys-48-Cys-63, Cys-55-Cys-72, Cys-62-Cys-87, and Cys-74-Cys-85.

The protein belongs to the neurotoxin 19 (CSTX) family. 01 subfamily. As to expression, expressed by the venom gland.

It localises to the secreted. The sequence is that of U3-lycotoxin-Ls1s from Lycosa singoriensis (Wolf spider).